Reading from the N-terminus, the 382-residue chain is Chorismate synthase (382 aa).

2 residues coordinate NADP(+): Arg-39 and Arg-45. The interval 89 to 113 (SPEPGGEPRKKALTDARPGHADLTG) is disordered. The span at 94–108 (GEPRKKALTDARPGH) shows a compositional bias: basic and acidic residues. Residues 128-130 (RAS), 246-247 (QA), Ala-290, 305-309 (KPIAT), and Arg-331 contribute to the FMN site.

Belongs to the chorismate synthase family. In terms of assembly, homotetramer. FMNH2 is required as a cofactor.

The catalysed reaction is 5-O-(1-carboxyvinyl)-3-phosphoshikimate = chorismate + phosphate. It participates in metabolic intermediate biosynthesis; chorismate biosynthesis; chorismate from D-erythrose 4-phosphate and phosphoenolpyruvate: step 7/7. Its function is as follows. Catalyzes the anti-1,4-elimination of the C-3 phosphate and the C-6 proR hydrogen from 5-enolpyruvylshikimate-3-phosphate (EPSP) to yield chorismate, which is the branch point compound that serves as the starting substrate for the three terminal pathways of aromatic amino acid biosynthesis. This reaction introduces a second double bond into the aromatic ring system. The polypeptide is Chorismate synthase (Deinococcus radiodurans (strain ATCC 13939 / DSM 20539 / JCM 16871 / CCUG 27074 / LMG 4051 / NBRC 15346 / NCIMB 9279 / VKM B-1422 / R1)).